We begin with the raw amino-acid sequence, 503 residues long: Lysine--tRNA ligase (503 aa).

Mg(2+) is bound by residues Glu-413 and Glu-420.

Belongs to the class-II aminoacyl-tRNA synthetase family. As to quaternary structure, homodimer. The cofactor is Mg(2+).

It is found in the cytoplasm. It carries out the reaction tRNA(Lys) + L-lysine + ATP = L-lysyl-tRNA(Lys) + AMP + diphosphate. This chain is Lysine--tRNA ligase, found in Mannheimia succiniciproducens (strain KCTC 0769BP / MBEL55E).